Consider the following 220-residue polypeptide: 7-cyano-7-deazaguanine synthase (220 aa).

10–20 contributes to the ATP binding site; the sequence is FSGGQDSTTCL. 4 residues coordinate Zn(2+): C186, C195, C198, and C201.

The protein belongs to the QueC family. As to quaternary structure, homodimer. It depends on Zn(2+) as a cofactor.

It catalyses the reaction 7-carboxy-7-deazaguanine + NH4(+) + ATP = 7-cyano-7-deazaguanine + ADP + phosphate + H2O + H(+). It participates in purine metabolism; 7-cyano-7-deazaguanine biosynthesis. Catalyzes the ATP-dependent conversion of 7-carboxy-7-deazaguanine (CDG) to 7-cyano-7-deazaguanine (preQ(0)). This Bacillus anthracis (strain A0248) protein is 7-cyano-7-deazaguanine synthase.